Consider the following 1071-residue polypeptide: Exportin-1 (1071 aa).

Residues 1–679 form a necessary for HTLV-1 Rex-mediated mRNA export region; sequence MPAIMTMLAD…QQATKNVDIL (679 aa). The Importin N-terminal domain occupies 46–112; the sequence is AQEVLTHLKE…KKYVVGLIIK (67 aa). 6 HEAT repeats span residues 217–240, 241–277, 354–472, 515–553, 560–597, and 602–639; these read QNAPLVHATLETLLRFLNWIPLGY, IFETKLISTLIYKFLNVPMFRNVSLKCLTEIAGVSVS, MLLV…YVDT, RFLVTVIKDLLGLCEQKRGKDNKAIIASNIMYIVGQYPR, KFLKTVVNKLFEFMHETHDGVQDMACDTFIKIAQKCRR, and VQVGEVMPFIDEILNNINTIICDLQPQQVHTFYEAVGY. The tract at residues 327 to 450 is interaction with Ran and nuclear export complex formation; the sequence is CTFLKEHDQL…VREFMKDTDS (124 aa). Phosphoserine is present on Ser391. Positions 411-414 are necessary for HTLV-1 Rex multimerization; that stretch reads PMLF. Residues 411 to 481 are interaction with RANBP3; the sequence is PMLFKVRLLM…TERIMTEKLH (71 aa). Lys446 is subject to N6-acetyllysine. Thr448 is modified (phosphothreonine). Residue Ser450 is modified to Phosphoserine. Tyr454 carries the post-translational modification Phosphotyrosine. Lys693 carries the N6-acetyllysine modification. HEAT repeat units follow at residues 775-813, 885-916, 917-954, and 1002-1039; these read NFVPPLLDAVLIDYQRNVPAAREPEVLSTMAIIVNKLGG, TMRNVADTGLQILFTLLQNVAQEEAAAQSFYQ, TYFCDILQHIFSVVTDTSHTAGLTMHASILAYMFNLVE, and FSLNQDIPAFKEHLRDFLVQIKEFAGEDTSDLFLEERE. An interaction with HIV-1 Rev region spans residues 800–820; the sequence is VLSTMAIIVNKLGGHITAEIP. At Ser1031 the chain carries Phosphoserine.

This sequence belongs to the exportin family. In terms of assembly, found in a U snRNA export complex with PHAX/RNUXA, NCBP1/CBP80, NCBP2/CBP20, RAN, XPO1 and m7G-capped RNA. Component of a nuclear export receptor complex composed of KPNB1, RAN, SNUPN and XPO1. Found in a trimeric export complex with SNUPN, RAN and XPO1. Found in a nuclear export complex with RANBP3 and RAN. Found in a 60S ribosomal subunit export complex with NMD3, RAN, XPO1. Interacts with DDX3X, NMD3, NUP42, NUP88, NUP214, RANBP3 and TERT. Interacts with NEMF (via its N-terminus). Interacts with the monomeric form of BIRC5/survivin deacetylated at 'Lys-129'. Interacts with DTNBP1 and SERTAD2; the interactions translocate DTNBP1 and SERTAD2 out of the nucleus. Interacts with ATF2. Interacts with SLC35G1 and STIM1. Interacts with DCAF8. Interacts with CPEB3. Interacts with HAX1. Interacts with BOK; translocates to the cytoplasm. Interacts with HSP90AB1. Interacts with LRPPRC; interacts with LRPPRC alone and also when LRPPRC is in complex with EIF4E and with EIF4E sensitivity element (4ESE)-containing mRNAs to form an EIF4E-dependent mRNA export complex. As to quaternary structure, (Microbial infection) Interacts with HIV-1 Rev. (Microbial infection) Interacts with HTLV-1 Rex. In terms of assembly, (Microbial infection) Interacts with influenza A nucleoprotein. As to quaternary structure, (Microbial infection) Interacts with Epstein-Barr virus protein BMLF1. (Microbial infection) Part of a tetrameric complex composed of CRM1, importin alpha/beta dimer and the Venezuelan equine encephalitis virus (VEEV) capsid; this complex blocks the receptor-mediated transport through the nuclear pore. In terms of assembly, (Microbial infection) Interacts with SARS-CoV virus protein ORF9b; this interaction mediates protein ORF9b export out of the nucleus. In terms of tissue distribution, expressed in heart, brain, placenta, lung, liver, skeletal muscle, pancreas, spleen, thymus, prostate, testis, ovary, small intestine, colon and peripheral blood leukocytes. Not expressed in the kidney.

The protein localises to the cytoplasm. It is found in the nucleus. Its subcellular location is the nucleoplasm. The protein resides in the cajal body. It localises to the nucleolus. In terms of biological role, mediates the nuclear export of cellular proteins (cargos) bearing a leucine-rich nuclear export signal (NES) and of RNAs. In the nucleus, in association with RANBP3, binds cooperatively to the NES on its target protein and to the GTPase RAN in its active GTP-bound form (Ran-GTP). Docking of this complex to the nuclear pore complex (NPC) is mediated through binding to nucleoporins. Upon transit of a nuclear export complex into the cytoplasm, disassembling of the complex and hydrolysis of Ran-GTP to Ran-GDP (induced by RANBP1 and RANGAP1, respectively) cause release of the cargo from the export receptor. The directionality of nuclear export is thought to be conferred by an asymmetric distribution of the GTP- and GDP-bound forms of Ran between the cytoplasm and nucleus. Involved in U3 snoRNA transport from Cajal bodies to nucleoli. Binds to late precursor U3 snoRNA bearing a TMG cap. Its function is as follows. (Microbial infection) Mediates the export of unspliced or incompletely spliced RNAs out of the nucleus from different viruses including HIV-1, HTLV-1 and influenza A. Interacts with, and mediates the nuclear export of HIV-1 Rev and HTLV-1 Rex proteins. Involved in HTLV-1 Rex multimerization. The protein is Exportin-1 (XPO1) of Homo sapiens (Human).